A 142-amino-acid chain; its full sequence is Neuritin (142 aa).

The signal sequence occupies residues 1–27; that stretch reads MGLTLSGRYISLFLAVQIAYLLQAVRA. Residue Ala-112 is the site of GPI-anchor amidated alanine attachment. Residues 113 to 142 constitute a propeptide, removed in mature form; it reads GGNGAIRSSVPFGVTLLITALSALVTWMQF.

Belongs to the neuritin family.

Its subcellular location is the cell membrane. It localises to the synapse. Modulates postsynaptic dendritic arbor elaboration and synaptic maturation. In Danio rerio (Zebrafish), this protein is Neuritin (nrn1).